Here is a 285-residue protein sequence, read N- to C-terminus: Energy-coupling factor transporter ATP-binding protein EcfA2 (285 aa).

Residues leucine 6 to arginine 242 enclose the ABC transporter domain. Glycine 39 to serine 46 is a binding site for ATP.

Belongs to the ABC transporter superfamily. Energy-coupling factor EcfA family. Forms a stable energy-coupling factor (ECF) transporter complex composed of 2 membrane-embedded substrate-binding proteins (S component), 2 ATP-binding proteins (A component) and 2 transmembrane proteins (T component).

Its subcellular location is the cell membrane. ATP-binding (A) component of a common energy-coupling factor (ECF) ABC-transporter complex. Unlike classic ABC transporters this ECF transporter provides the energy necessary to transport a number of different substrates. The polypeptide is Energy-coupling factor transporter ATP-binding protein EcfA2 (Clostridium perfringens (strain SM101 / Type A)).